The chain runs to 24 residues: Ranatuerin-4 (24 aa).

Cys-18 and Cys-24 form a disulfide bridge.

The protein belongs to the frog skin active peptide (FSAP) family. Ranatuerin subfamily. As to expression, expressed by the skin glands.

The protein localises to the secreted. In terms of biological role, antibacterial activity against Gram-positive bacterium S.aureus (MIC=55 uM). Shows no detectable hemolytic activity towards human erythrocytes. This chain is Ranatuerin-4, found in Aquarana catesbeiana (American bullfrog).